A 148-amino-acid chain; its full sequence is Ribosome maturation factor RimP (148 aa).

Belongs to the RimP family.

The protein resides in the cytoplasm. In terms of biological role, required for maturation of 30S ribosomal subunits. This Thermosipho africanus (strain TCF52B) protein is Ribosome maturation factor RimP.